A 69-amino-acid chain; its full sequence is Disintegrin EMF10A (69 aa).

The Disintegrin domain maps to 1-66 (MNSANPCCDP…DCPRNPWKSE (66 aa)). 4 cysteine pairs are disulfide-bonded: Cys-7-Cys-30, Cys-21-Cys-27, Cys-26-Cys-51, and Cys-39-Cys-58. The Cell attachment site motif lies at 43-45 (RGD).

This sequence belongs to the disintegrin family. Dimeric disintegrin subfamily. As to quaternary structure, heterodimer with EMF10B; disulfide-linked. Expressed by the venom gland.

It localises to the secreted. Extremely potent and selective inhibitor of integrin alpha-5/beta-1 (ITGA5/ITGB1). Partially inhibits adhesion of cells expressing alpha-IIb/beta-3 (ITGA2B/ITGB3), alpha-V/beta-3 (ITGAV/ITGB3), and alpha-4/beta-1 (ITGA4/ITGB1) to appropriate ligands only at concentration higher than 500 nM. Weakly inhibits ADP-induced platelet aggregation. This chain is Disintegrin EMF10A, found in Eristicophis macmahoni (Leaf-nosed viper).